The chain runs to 1394 residues: DNA-directed RNA polymerase subunit beta' (1394 aa).

Zn(2+)-binding residues include Cys-70, Cys-72, Cys-85, and Cys-88. Mg(2+) is bound by residues Asp-470, Asp-472, and Asp-474. 4 residues coordinate Zn(2+): Cys-815, Cys-889, Cys-896, and Cys-899.

Belongs to the RNA polymerase beta' chain family. In terms of assembly, the RNAP catalytic core consists of 2 alpha, 1 beta, 1 beta' and 1 omega subunit. When a sigma factor is associated with the core the holoenzyme is formed, which can initiate transcription. Mg(2+) serves as cofactor. The cofactor is Zn(2+).

The enzyme catalyses RNA(n) + a ribonucleoside 5'-triphosphate = RNA(n+1) + diphosphate. Functionally, DNA-dependent RNA polymerase catalyzes the transcription of DNA into RNA using the four ribonucleoside triphosphates as substrates. The sequence is that of DNA-directed RNA polymerase subunit beta' from Anaeromyxobacter dehalogenans (strain 2CP-C).